The following is a 286-amino-acid chain: Putative cyclin-H (286 aa).

In terms of domain architecture, Cyclin N-terminal spans 79 to 148 (AIIYIKRFYL…ILESLNFNLI (70 aa)). Residues 235–286 (NNNNNNNNNNNNNNNNNNNNNNNNNNNNNNNNNNNNNNNNNNNNNNNNNLLL) form a disordered region.

The protein belongs to the cyclin family. Cyclin C subfamily.

It is found in the nucleus. Its function is as follows. May regulate cdk7 involved in transcription regulation and cell cycle progression. The polypeptide is Putative cyclin-H (cycH) (Dictyostelium discoideum (Social amoeba)).